The sequence spans 173 residues: uncharacterized protein (173 aa).

The span at 1 to 11 shows a compositional bias: basic and acidic residues; it reads MLCAKNKKDPK. The disordered stretch occupies residues 1 to 173; the sequence is MLCAKNKKDP…EKMEKSEKAY (173 aa). Residues 17–41 show a composition bias toward polar residues; that stretch reads FSETSKVQNVQNTQPKPAAPSQMSI. Composition is skewed to basic and acidic residues over residues 56 to 109 and 120 to 144; these read KSVE…KADN and AKKEQEEENPKTDLESHKDEAEAKK. Over residues 145 to 156 the composition is skewed to basic residues; it reads KESRRQKKMRNK. A compositionally biased stretch (basic and acidic residues) spans 157–173; it reads NSKEGSVEKMEKSEKAY.

This is an uncharacterized protein from Caenorhabditis elegans.